A 41-amino-acid polypeptide reads, in one-letter code: MKVRNSLKSLRGRHRANRLVRRKGRVYVINKVQRRFKARQG.

This sequence belongs to the bacterial ribosomal protein bL36 family.

In Bradyrhizobium diazoefficiens (strain JCM 10833 / BCRC 13528 / IAM 13628 / NBRC 14792 / USDA 110), this protein is Large ribosomal subunit protein bL36.